We begin with the raw amino-acid sequence, 100 residues long: Urease subunit gamma (100 aa).

Belongs to the urease gamma subunit family. In terms of assembly, heterotrimer of UreA (gamma), UreB (beta) and UreC (alpha) subunits. Three heterotrimers associate to form the active enzyme.

Its subcellular location is the cytoplasm. It carries out the reaction urea + 2 H2O + H(+) = hydrogencarbonate + 2 NH4(+). The protein operates within nitrogen metabolism; urea degradation; CO(2) and NH(3) from urea (urease route): step 1/1. This is Urease subunit gamma from Thermosynechococcus vestitus (strain NIES-2133 / IAM M-273 / BP-1).